Here is a 70-residue protein sequence, read N- to C-terminus: DNA gyrase inhibitor YacG (70 aa).

Zn(2+)-binding residues include cysteine 21, cysteine 24, cysteine 36, and cysteine 40.

It belongs to the DNA gyrase inhibitor YacG family. Interacts with GyrB. It depends on Zn(2+) as a cofactor.

In terms of biological role, inhibits all the catalytic activities of DNA gyrase by preventing its interaction with DNA. Acts by binding directly to the C-terminal domain of GyrB, which probably disrupts DNA binding by the gyrase. The protein is DNA gyrase inhibitor YacG of Sinorhizobium medicae (strain WSM419) (Ensifer medicae).